A 207-amino-acid polypeptide reads, in one-letter code: LexA repressor (207 aa).

The H-T-H motif DNA-binding region spans 28–48; that stretch reads VREIGEAVGLASSFTVHGHLS. Active-site for autocatalytic cleavage activity residues include serine 130 and lysine 168.

This sequence belongs to the peptidase S24 family. In terms of assembly, homodimer.

The enzyme catalyses Hydrolysis of Ala-|-Gly bond in repressor LexA.. Represses a number of genes involved in the response to DNA damage (SOS response), including recA and lexA. In the presence of single-stranded DNA, RecA interacts with LexA causing an autocatalytic cleavage which disrupts the DNA-binding part of LexA, leading to derepression of the SOS regulon and eventually DNA repair. In Staphylococcus aureus (strain Newman), this protein is LexA repressor.